A 940-amino-acid chain; its full sequence is Insulin receptor substrate 1 (940 aa).

Positions 8–109 constitute a PH domain; sequence GMVLSGYHKK…WLDKLLLLQR (102 aa). The region spanning 122–236 is the IRS-type PTB domain; the sequence is YEHVWQVIIQ…SAMSAKTDSN (115 aa). Phosphoserine occurs at positions 284, 285, and 340. At Tyr-407 the chain carries Phosphotyrosine; by INSR. Positions 407–410 match the YXXM motif 1 motif; it reads YIPM. The segment covering 523 to 540 has biased composition (polar residues); the sequence is NRSQNNISKEGPISGTST. The disordered stretch occupies residues 523 to 549; it reads NRSQNNISKEGPISGTSTNREKKSTSA. A Phosphoserine modification is found at Ser-548. The short motif at 639–642 is the YXXM motif 2 element; that stretch reads YLEM. Position 883 is a phosphotyrosine; by INSR (Tyr-883). Residues 895-915 form a disordered region; sequence NPAKYLKRGSRESPPVATCAE. Phosphoserine is present on residues Ser-904 and Ser-907. The residue at position 920 (Tyr-920) is a Phosphotyrosine; by INSR.

As to quaternary structure, bindings to phosphatidylinositol 3-kinase and SHP2.

Activates phosphatidylinositol 3-kinase when bound to the regulatory p85 subunit. May mediate the control of various cellular processes by insulin-like peptides. When phosphorylated by the insulin receptor binds specifically to various cellular proteins containing SH2 domains. Involved in control of cell proliferation, cell size, and body and organ growth throughout development. Also has a role in a signaling pathway controlling the physiological response required to endure periods of low nutrient conditions. Insulin/insulin-like growth factor (IGF) signaling pathway has a role in regulating aging and is necessary in the ovary for vitellogenic maturation. This Drosophila ananassae (Fruit fly) protein is Insulin receptor substrate 1.